The following is a 338-amino-acid chain: Ketol-acid reductoisomerase (NADP(+)) (338 aa).

The region spanning Met-1 to Thr-181 is the KARI N-terminal Rossmann domain. NADP(+) contacts are provided by residues Tyr-24 to Gln-27, Arg-47, Ser-50, Ser-52, and Asp-82 to Gln-85. Residue His-107 is part of the active site. NADP(+) is bound at residue Gly-133. Residues Thr-182 to Ile-327 enclose the KARI C-terminal knotted domain. Residues Asp-190, Glu-194, Glu-226, and Glu-230 each contribute to the Mg(2+) site. Ser-251 serves as a coordination point for substrate.

Belongs to the ketol-acid reductoisomerase family. Mg(2+) is required as a cofactor.

The catalysed reaction is (2R)-2,3-dihydroxy-3-methylbutanoate + NADP(+) = (2S)-2-acetolactate + NADPH + H(+). It carries out the reaction (2R,3R)-2,3-dihydroxy-3-methylpentanoate + NADP(+) = (S)-2-ethyl-2-hydroxy-3-oxobutanoate + NADPH + H(+). It participates in amino-acid biosynthesis; L-isoleucine biosynthesis; L-isoleucine from 2-oxobutanoate: step 2/4. The protein operates within amino-acid biosynthesis; L-valine biosynthesis; L-valine from pyruvate: step 2/4. In terms of biological role, involved in the biosynthesis of branched-chain amino acids (BCAA). Catalyzes an alkyl-migration followed by a ketol-acid reduction of (S)-2-acetolactate (S2AL) to yield (R)-2,3-dihydroxy-isovalerate. In the isomerase reaction, S2AL is rearranged via a Mg-dependent methyl migration to produce 3-hydroxy-3-methyl-2-ketobutyrate (HMKB). In the reductase reaction, this 2-ketoacid undergoes a metal-dependent reduction by NADPH to yield (R)-2,3-dihydroxy-isovalerate. The chain is Ketol-acid reductoisomerase (NADP(+)) from Alcanivorax borkumensis (strain ATCC 700651 / DSM 11573 / NCIMB 13689 / SK2).